The chain runs to 122 residues: UPF0102 protein Rleg2_4331 (122 aa).

The protein belongs to the UPF0102 family.

The polypeptide is UPF0102 protein Rleg2_4331 (Rhizobium leguminosarum bv. trifolii (strain WSM2304)).